A 348-amino-acid chain; its full sequence is Protein RecA (348 aa).

65 to 72 (GPESSGKT) contributes to the ATP binding site.

It belongs to the RecA family.

It localises to the cytoplasm. Its function is as follows. Can catalyze the hydrolysis of ATP in the presence of single-stranded DNA, the ATP-dependent uptake of single-stranded DNA by duplex DNA, and the ATP-dependent hybridization of homologous single-stranded DNAs. It interacts with LexA causing its activation and leading to its autocatalytic cleavage. In Saccharophagus degradans (strain 2-40 / ATCC 43961 / DSM 17024), this protein is Protein RecA.